The chain runs to 237 residues: Putative N-acetylmannosamine-6-phosphate 2-epimerase (237 aa).

Belongs to the NanE family.

The enzyme catalyses an N-acyl-D-glucosamine 6-phosphate = an N-acyl-D-mannosamine 6-phosphate. The protein operates within amino-sugar metabolism; N-acetylneuraminate degradation; D-fructose 6-phosphate from N-acetylneuraminate: step 3/5. Functionally, converts N-acetylmannosamine-6-phosphate (ManNAc-6-P) to N-acetylglucosamine-6-phosphate (GlcNAc-6-P). This is Putative N-acetylmannosamine-6-phosphate 2-epimerase from Caldanaerobacter subterraneus subsp. tengcongensis (strain DSM 15242 / JCM 11007 / NBRC 100824 / MB4) (Thermoanaerobacter tengcongensis).